Here is a 276-residue protein sequence, read N- to C-terminus: Ribosomal RNA small subunit methyltransferase A (276 aa).

S-adenosyl-L-methionine contacts are provided by His15, Leu17, Gly42, Glu64, Asp89, and Asn108.

Belongs to the class I-like SAM-binding methyltransferase superfamily. rRNA adenine N(6)-methyltransferase family. RsmA subfamily.

It is found in the cytoplasm. It catalyses the reaction adenosine(1518)/adenosine(1519) in 16S rRNA + 4 S-adenosyl-L-methionine = N(6)-dimethyladenosine(1518)/N(6)-dimethyladenosine(1519) in 16S rRNA + 4 S-adenosyl-L-homocysteine + 4 H(+). Functionally, specifically dimethylates two adjacent adenosines (A1518 and A1519) in the loop of a conserved hairpin near the 3'-end of 16S rRNA in the 30S particle. May play a critical role in biogenesis of 30S subunits. This is Ribosomal RNA small subunit methyltransferase A from Prochlorococcus marinus (strain MIT 9515).